Here is a 331-residue protein sequence, read N- to C-terminus: L-lactate dehydrogenase A chain (331 aa).

Residues 29-57 and Arg-98 each bind NAD(+); that span reads GMVG…MEDK. The substrate site is built by Arg-105, Asn-137, and Arg-168. Asn-137 contacts NAD(+). His-192 functions as the Proton acceptor in the catalytic mechanism. Thr-247 lines the substrate pocket.

It belongs to the LDH/MDH superfamily. LDH family. As to quaternary structure, homotetramer.

The protein resides in the cytoplasm. It carries out the reaction (S)-lactate + NAD(+) = pyruvate + NADH + H(+). It participates in fermentation; pyruvate fermentation to lactate; (S)-lactate from pyruvate: step 1/1. Interconverts simultaneously and stereospecifically pyruvate and lactate with concomitant interconversion of NADH and NAD(+). This chain is L-lactate dehydrogenase A chain (ldha), found in Gobionotothen gibberifrons (Humped rockcod).